A 300-amino-acid chain; its full sequence is Oxidoreductase BOA1 (300 aa).

It belongs to the NmrA-type oxidoreductase family. Isoflavone reductase subfamily.

It participates in polyketide biosynthesis. Its function is as follows. Oxidoreductase; part of the gene cluster A that mediates the biosynthesis of botcinic acid and its botcinin derivatives, acetate-derived polyketides that contribute to virulence when combined with the sesquiterpene botrydial. Botcinic acid and its derivatives have been shown to induce chlorosis and necrosis during host plant infection, but also have antifungal activities. Two polyketide synthases, BOA6 and BOA9, are involved in the biosynthesis of botcinins. BOA6 mediates the formation of the per-methylated tetraketide core by condensation of four units of malonyl-CoA with one unit of acetyl-CoA, which would be methylated in activated methylene groups to yield a bicyclic acid intermediate that could then either be converted to botrylactone derivatives or lose the starter acetate unit through a retro-Claisen type C-C bond cleavage to yield botcinin derivatives. The second polyketide synthase, BOA9, is probably required for the biosynthesis of the tetraketide side chain of botcinins. The methyltransferase (MT) domain within BOA6 is probably responsible for the incorporation of four methyl groups. The trans-enoyl reductase BOA5 might take over the enoyl reductase function of BOA6 that misses an ER domain. The monooxygenases BOA2, BOA3 and BOA4 might be involved in further hydroxylations at C4, C5 and C8, whereas BOA7, close to BOA9, could potentially be involved in the hydroxylation at C4 in the side chain of botcinins. The sequence is that of Oxidoreductase BOA1 from Botryotinia fuckeliana (strain B05.10) (Noble rot fungus).